Reading from the N-terminus, the 625-residue chain is MRPAQTNQFDYVKIGLASPERIRQWGERTLPNGQVVGEVTKPETINYRTLKPEMDGLFCERIFGPAKDWECHCGKYKRVRHRGIVCERCGVEVTESRVRRHRMGYIKLAAPVAHVWYLKGIPSYISILLDMPLRDVEQIVYFNSYVVLSPGNAETLTYKQLLSEDQWLEIEDQIYSEDSVLQGVEVGIGAEALLRLLADINLEQEAESLREEIGNAKGQKRAKLIKRLRVIDNFIATGSKPEWMVMAVIPVIPPDLRPMVQLDGGRFATSDLNDLYRRVINRNNRLARLQEILAPEIIVRNEKRMLQEAVDALIDNGRRGRTVVGANNRPLKSLSDIIEGKQGRFRQNLLGKRVDYSGRSVIVVGPKLKIHQCGLPREMAIELFQPFVINRLIRSGMVNNIKAAKKLISRNDPSVWDVLEEVIEGHPVMLNRAPTLHRLGIQSFEPILVEGRAIQLHPLVCPAFNADFDGDQMAVHVPLSLESQAEARLLMLASNNILSPATGKPIITPSQDMVLGAYYLTAENPGATKGAGNYFSSLEDVIMAFQQDQIDLHAYIYVRFDGEIESDQPDTEPVKVTENEDGTRTLLYKFRRVRQDAKGNVLSQYIYTTPGRVIYNNAIQEALAS.

Residues C71, C73, C86, and C89 each coordinate Zn(2+). Residues D467, D469, and D471 each coordinate Mg(2+).

It belongs to the RNA polymerase beta' chain family. RpoC1 subfamily. In terms of assembly, in cyanobacteria the RNAP catalytic core is composed of 2 alpha, 1 beta, 1 beta', 1 gamma and 1 omega subunit. When a sigma factor is associated with the core the holoenzyme is formed, which can initiate transcription. Mg(2+) is required as a cofactor. The cofactor is Zn(2+).

It carries out the reaction RNA(n) + a ribonucleoside 5'-triphosphate = RNA(n+1) + diphosphate. Functionally, DNA-dependent RNA polymerase catalyzes the transcription of DNA into RNA using the four ribonucleoside triphosphates as substrates. The protein is DNA-directed RNA polymerase subunit gamma of Nostoc punctiforme (strain ATCC 29133 / PCC 73102).